The following is a 252-amino-acid chain: Delta-like protein dsl-1 (252 aa).

The N-terminal stretch at 1-17 (MLKYLIFLAILISVVHS) is a signal peptide. A DSL domain is found at 120–164 (IKCNRYWHGLHCDHFCNDDFARTINRRCTQNGTLGCLEGFHGPNC). Cystine bridges form between cysteine 122/cysteine 131, cysteine 135/cysteine 147, cysteine 155/cysteine 164, cysteine 173/cysteine 181, cysteine 175/cysteine 197, and cysteine 199/cysteine 209. The region spanning 169-210 (PADSCKCQNGGKCVSSLENTWAQNGSLICECRLGHFEGKHCE) is the EGF-like domain.

May interact with lin-12/Notch receptor.

It localises to the secreted. Its function is as follows. Probable secreted Notch ligand involved in the mediation of Notch signaling. Involved in the lin-12/Notch pathway-mediated signaling of cell fate in vulval precursor cells (VPCs), acting redundantly with lag-2, apx-1 and osm-11. May also be involved in glp-1/Notch signaling. This chain is Delta-like protein dsl-1, found in Caenorhabditis elegans.